Reading from the N-terminus, the 334-residue chain is D-fructose 1,6-bisphosphatase class 2/sedoheptulose 1,7-bisphosphatase (334 aa).

Asp33, Glu57, Asp85, and Glu88 together coordinate Mn(2+). Residues 88 to 90, Tyr119, 164 to 166, and 186 to 188 contribute to the substrate site; these read EGT, RAR, and DGD. Glu213 contacts Mn(2+).

It belongs to the FBPase class 2 family. As to quaternary structure, homotetramer. Requires Mn(2+) as cofactor.

It catalyses the reaction beta-D-fructose 1,6-bisphosphate + H2O = beta-D-fructose 6-phosphate + phosphate. The enzyme catalyses D-sedoheptulose 1,7-bisphosphate + H2O = D-sedoheptulose 7-phosphate + phosphate. It functions in the pathway carbohydrate biosynthesis; Calvin cycle. In terms of biological role, catalyzes the hydrolysis of fructose 1,6-bisphosphate (Fru 1,6-P2) and sedoheptulose 1,7-bisphosphate (Sed 1,7-P2) to fructose 6-phosphate and sedoheptulose 7-phosphate, respectively. The polypeptide is D-fructose 1,6-bisphosphatase class 2/sedoheptulose 1,7-bisphosphatase (Prochlorococcus marinus (strain NATL1A)).